A 198-amino-acid polypeptide reads, in one-letter code: Nucleoid occlusion factor SlmA (198 aa).

The region spanning 9 to 70 is the HTH tetR-type domain; that stretch reads RNRREEILQA…SLIEFIEDSL (62 aa). A DNA-binding region (H-T-H motif) is located at residues 33–52; that stretch reads TTAKLAANVGVSEAALYRHF. A coiled-coil region spans residues 117–144; it reads EQDRLQGRINQLFERIEAQLRQVLKERK.

It belongs to the nucleoid occlusion factor SlmA family. As to quaternary structure, homodimer. Interacts with FtsZ.

Its subcellular location is the cytoplasm. The protein resides in the nucleoid. Its function is as follows. Required for nucleoid occlusion (NO) phenomenon, which prevents Z-ring formation and cell division over the nucleoid. Acts as a DNA-associated cell division inhibitor that binds simultaneously chromosomal DNA and FtsZ, and disrupts the assembly of FtsZ polymers. SlmA-DNA-binding sequences (SBS) are dispersed on non-Ter regions of the chromosome, preventing FtsZ polymerization at these regions. The protein is Nucleoid occlusion factor SlmA of Serratia proteamaculans (strain 568).